A 421-amino-acid chain; its full sequence is GTPase Obg (421 aa).

One can recognise an Obg domain in the interval 1–158; the sequence is MYFIDEAINE…FKIKTELKIL (158 aa). The region spanning 159 to 324 is the OBG-type G domain; the sequence is ADVGLIGYPS…LKYKMLEMIK (166 aa). GTP-binding positions include 165 to 172, 190 to 194, 211 to 214, 278 to 281, and 305 to 307; these read GYPSVGKS, FTTLK, DLPG, NKMD, and SLL. Residues S172 and T192 each coordinate Mg(2+). Positions 342–421 constitute an OCT domain; sequence TLEEEKPDFV…ICDRVFEFIT (80 aa).

This sequence belongs to the TRAFAC class OBG-HflX-like GTPase superfamily. OBG GTPase family. In terms of assembly, monomer. The cofactor is Mg(2+).

The protein localises to the cytoplasm. In terms of biological role, an essential GTPase which binds GTP, GDP and possibly (p)ppGpp with moderate affinity, with high nucleotide exchange rates and a fairly low GTP hydrolysis rate. Plays a role in control of the cell cycle, stress response, ribosome biogenesis and in those bacteria that undergo differentiation, in morphogenesis control. The sequence is that of GTPase Obg from Phytoplasma mali (strain AT).